Consider the following 338-residue polypeptide: MLSKNVHTADVVIVGAGPVGLFAVFQAGMLEMKCHVVDALDCIGGQCVTLYPDKPIYDIPAYPVITAAKLIEQLKQQVAPFDTVYHLGQQVIGCKIDNDIITITTSAEQVICSKSLIIAAGCGAFKYKRLILDNIEAFENKTVFYSVKDKNKFINKKVVIAGGGDSAIDWTLLLSDVAEVIYLVHRRENFRCAPHSLNQIKQLAEYGKVQMIVPYQLAKLTGENGLLQEVLVTNFNGGTQTLPADYLLAFFGLAADLGPIHKWGLKTDLRRIEVNSITYETTIPGIYAIGDVASYPGKLKLILTGFAEAATAMSHCYQRVFGKKMHFQYSTVKGVLRS.

7 residues coordinate FAD: Asp38, Gln46, Tyr51, Val91, Phe125, Asp291, and Thr331.

It belongs to the ferredoxin--NADP reductase type 2 family. As to quaternary structure, homodimer. FAD is required as a cofactor.

The enzyme catalyses 2 reduced [2Fe-2S]-[ferredoxin] + NADP(+) + H(+) = 2 oxidized [2Fe-2S]-[ferredoxin] + NADPH. The protein is Ferredoxin--NADP reductase of Orientia tsutsugamushi (strain Boryong) (Rickettsia tsutsugamushi).